A 152-amino-acid polypeptide reads, in one-letter code: Deoxyuridine 5'-triphosphate nucleotidohydrolase (152 aa).

Substrate is bound by residues 71–73 (RSG), Asn84, 88–90 (LID), and Met98.

It belongs to the dUTPase family. Mg(2+) serves as cofactor.

The enzyme catalyses dUTP + H2O = dUMP + diphosphate + H(+). It functions in the pathway pyrimidine metabolism; dUMP biosynthesis; dUMP from dCTP (dUTP route): step 2/2. Its function is as follows. This enzyme is involved in nucleotide metabolism: it produces dUMP, the immediate precursor of thymidine nucleotides and it decreases the intracellular concentration of dUTP so that uracil cannot be incorporated into DNA. The sequence is that of Deoxyuridine 5'-triphosphate nucleotidohydrolase from Aeromonas hydrophila subsp. hydrophila (strain ATCC 7966 / DSM 30187 / BCRC 13018 / CCUG 14551 / JCM 1027 / KCTC 2358 / NCIMB 9240 / NCTC 8049).